The chain runs to 292 residues: Phosphatidylglycerol--prolipoprotein diacylglyceryl transferase (292 aa).

Transmembrane regions (helical) follow at residues 24–44 (ISVH…LLIA), 65–85 (FFIW…VLIY), 110–130 (GISG…AIIF), and 136–156 (QSFW…YVFG). An a 1,2-diacyl-sn-glycero-3-phospho-(1'-sn-glycerol)-binding site is contributed by Arg157. The next 3 membrane-spanning stretches (helical) occupy residues 192-212 (SQLF…ICLL), 219-239 (GTLL…CEYF), and 256-276 (GQIL…FVFV).

This sequence belongs to the Lgt family.

The protein resides in the cell inner membrane. The enzyme catalyses L-cysteinyl-[prolipoprotein] + a 1,2-diacyl-sn-glycero-3-phospho-(1'-sn-glycerol) = an S-1,2-diacyl-sn-glyceryl-L-cysteinyl-[prolipoprotein] + sn-glycerol 1-phosphate + H(+). It participates in protein modification; lipoprotein biosynthesis (diacylglyceryl transfer). Catalyzes the transfer of the diacylglyceryl group from phosphatidylglycerol to the sulfhydryl group of the N-terminal cysteine of a prolipoprotein, the first step in the formation of mature lipoproteins. The sequence is that of Phosphatidylglycerol--prolipoprotein diacylglyceryl transferase from Helicobacter hepaticus (strain ATCC 51449 / 3B1).